A 157-amino-acid chain; its full sequence is Beta-defensin 125 (157 aa).

The signal sequence occupies residues 1–20 (MNILMLTFIICGLLTQVTKG). 3 cysteine pairs are disulfide-bonded: Cys-27-Cys-55, Cys-35-Cys-49, and Cys-39-Cys-56. The tract at residues 109–157 (GETMTPETNTPETTVPPSETTTPETTMPPSETATSETMPPPSQTALTHN) is disordered. The segment covering 110-145 (ETMTPETNTPETTVPPSETTTPETTMPPSETATSET) has biased composition (low complexity).

It belongs to the beta-defensin family.

It is found in the secreted. In terms of biological role, has antibacterial activity. The polypeptide is Beta-defensin 125 (DEFB125) (Gorilla gorilla gorilla (Western lowland gorilla)).